Here is a 92-residue protein sequence, read N- to C-terminus: MARSVWKGPFVDLHLLKKAEAAQDAGSRAGPIKTWSRRSTIIPQFVGLTFNVYNGQKFIPVSVSEEMVGHKLGEFAPTRNFPGHAADKKGKR.

This sequence belongs to the universal ribosomal protein uS19 family.

Protein S19 forms a complex with S13 that binds strongly to the 16S ribosomal RNA. The chain is Small ribosomal subunit protein uS19 from Novosphingobium aromaticivorans (strain ATCC 700278 / DSM 12444 / CCUG 56034 / CIP 105152 / NBRC 16084 / F199).